Consider the following 323-residue polypeptide: L-lactate dehydrogenase (323 aa).

NAD(+) is bound by residues Val11, Asp32, and Tyr63. Residues Gln80 and Arg86 each contribute to the substrate site. Residues Ser99, 116 to 118 (VSN), and Ser141 each bind NAD(+). 118–121 (NPVD) contacts substrate. Substrate is bound at residue 146–149 (DTAR). Arg151 and His166 together coordinate beta-D-fructose 1,6-bisphosphate. Residue His173 is the Proton acceptor of the active site. Phosphotyrosine is present on Tyr221. Thr230 provides a ligand contact to substrate.

The protein belongs to the LDH/MDH superfamily. LDH family. In terms of assembly, homotetramer.

The protein localises to the cytoplasm. The enzyme catalyses (S)-lactate + NAD(+) = pyruvate + NADH + H(+). It functions in the pathway fermentation; pyruvate fermentation to lactate; (S)-lactate from pyruvate: step 1/1. Allosterically activated by fructose 1,6-bisphosphate (FBP). Functionally, catalyzes the conversion of lactate to pyruvate. The sequence is that of L-lactate dehydrogenase from Kosmotoga olearia (strain ATCC BAA-1733 / DSM 21960 / TBF 19.5.1).